The sequence spans 373 residues: Alanine racemase (373 aa).

K35 functions as the Proton acceptor; specific for D-alanine in the catalytic mechanism. K35 is subject to N6-(pyridoxal phosphate)lysine. R130 is a substrate binding site. Residue Y253 is the Proton acceptor; specific for L-alanine of the active site. M305 serves as a coordination point for substrate.

The protein belongs to the alanine racemase family. It depends on pyridoxal 5'-phosphate as a cofactor.

The catalysed reaction is L-alanine = D-alanine. It participates in amino-acid biosynthesis; D-alanine biosynthesis; D-alanine from L-alanine: step 1/1. Its function is as follows. Catalyzes the interconversion of L-alanine and D-alanine. May also act on other amino acids. This Cupriavidus necator (strain ATCC 17699 / DSM 428 / KCTC 22496 / NCIMB 10442 / H16 / Stanier 337) (Ralstonia eutropha) protein is Alanine racemase (alr).